The following is a 195-amino-acid chain: Holliday junction branch migration complex subunit RuvA (195 aa).

The tract at residues 1 to 61 (MYEYLDGVVV…ENDQTLYGFK (61 aa)) is domain I. Residues 62-139 (KAEDKELFLN…AVENEVGTLF (78 aa)) form a domain II region. Residues 139 to 143 (FDLST) are flexible linker. The domain III stretch occupies residues 144-195 (TSNQALDEALEALIALGYSEKEVKKLTKKLSEQTDRTTDQYISSGLKLLMKG).

The protein belongs to the RuvA family. In terms of assembly, homotetramer. Forms an RuvA(8)-RuvB(12)-Holliday junction (HJ) complex. HJ DNA is sandwiched between 2 RuvA tetramers; dsDNA enters through RuvA and exits via RuvB. An RuvB hexamer assembles on each DNA strand where it exits the tetramer. Each RuvB hexamer is contacted by two RuvA subunits (via domain III) on 2 adjacent RuvB subunits; this complex drives branch migration. In the full resolvosome a probable DNA-RuvA(4)-RuvB(12)-RuvC(2) complex forms which resolves the HJ.

It is found in the cytoplasm. Functionally, the RuvA-RuvB-RuvC complex processes Holliday junction (HJ) DNA during genetic recombination and DNA repair, while the RuvA-RuvB complex plays an important role in the rescue of blocked DNA replication forks via replication fork reversal (RFR). RuvA specifically binds to HJ cruciform DNA, conferring on it an open structure. The RuvB hexamer acts as an ATP-dependent pump, pulling dsDNA into and through the RuvAB complex. HJ branch migration allows RuvC to scan DNA until it finds its consensus sequence, where it cleaves and resolves the cruciform DNA. The sequence is that of Holliday junction branch migration complex subunit RuvA from Pediococcus pentosaceus (strain ATCC 25745 / CCUG 21536 / LMG 10740 / 183-1w).